Here is a 251-residue protein sequence, read N- to C-terminus: Adenosine 5'-phosphosulfate reductase (251 aa).

Residues C121, C122, C204, and C207 each coordinate [4Fe-4S] cluster. C232 (nucleophile; cysteine thiosulfonate intermediate) is an active-site residue.

This sequence belongs to the PAPS reductase family. CysH subfamily. Requires [4Fe-4S] cluster as cofactor.

Its subcellular location is the cytoplasm. The enzyme catalyses [thioredoxin]-disulfide + sulfite + AMP + 2 H(+) = adenosine 5'-phosphosulfate + [thioredoxin]-dithiol. It participates in sulfur metabolism; hydrogen sulfide biosynthesis; sulfite from sulfate. Catalyzes the formation of sulfite from adenosine 5'-phosphosulfate (APS) using thioredoxin as an electron donor. This chain is Adenosine 5'-phosphosulfate reductase, found in Sinorhizobium fredii (strain USDA 257).